The primary structure comprises 105 residues: uncharacterized protein (105 aa).

Residues 1–11 (MPHRNDRRKSA) are compositionally biased toward basic residues. The tract at residues 1 to 20 (MPHRNDRRKSASKAPNAIIH) is disordered.

This sequence belongs to the ALB1 family.

Its subcellular location is the nucleus. It localises to the nucleolus. This is an uncharacterized protein from Schizosaccharomyces pombe (strain 972 / ATCC 24843) (Fission yeast).